Consider the following 677-residue polypeptide: uncharacterized protein (677 aa).

3 helical membrane passes run Ile-80–Phe-102, Ala-338–Phe-360, and Leu-367–Leu-386. Residues Asp-523 to Arg-556 form a disordered region. Positions Ser-533–Ser-546 are enriched in acidic residues.

It localises to the cell membrane. This is an uncharacterized protein from Treponema pallidum (strain Nichols).